The chain runs to 288 residues: NGG1-interacting factor 3 (288 aa).

The protein belongs to the GTP cyclohydrolase I type 2/NIF3 family. As to quaternary structure, may interact with NGG1.

Its subcellular location is the mitochondrion. The protein is NGG1-interacting factor 3 of Saccharomyces cerevisiae (strain ATCC 204508 / S288c) (Baker's yeast).